The following is a 92-amino-acid chain: Small ribosomal subunit protein uS19 (92 aa).

Belongs to the universal ribosomal protein uS19 family.

In terms of biological role, protein S19 forms a complex with S13 that binds strongly to the 16S ribosomal RNA. In Methylobacterium radiotolerans (strain ATCC 27329 / DSM 1819 / JCM 2831 / NBRC 15690 / NCIMB 10815 / 0-1), this protein is Small ribosomal subunit protein uS19.